A 111-amino-acid chain; its full sequence is Large ribosomal subunit protein bL21 (111 aa).

It belongs to the bacterial ribosomal protein bL21 family. As to quaternary structure, part of the 50S ribosomal subunit. Contacts protein L20.

This protein binds to 23S rRNA in the presence of protein L20. The sequence is that of Large ribosomal subunit protein bL21 from Thermosynechococcus vestitus (strain NIES-2133 / IAM M-273 / BP-1).